We begin with the raw amino-acid sequence, 432 residues long: Trigger factor (432 aa).

The 86-residue stretch at 163–248 (GDVVVLDFAA…VHAVKERRLP (86 aa)) folds into the PPIase FKBP-type domain.

The protein belongs to the FKBP-type PPIase family. Tig subfamily.

The protein localises to the cytoplasm. The enzyme catalyses [protein]-peptidylproline (omega=180) = [protein]-peptidylproline (omega=0). Functionally, involved in protein export. Acts as a chaperone by maintaining the newly synthesized protein in an open conformation. Functions as a peptidyl-prolyl cis-trans isomerase. In Nitratidesulfovibrio vulgaris (strain DSM 19637 / Miyazaki F) (Desulfovibrio vulgaris), this protein is Trigger factor.